We begin with the raw amino-acid sequence, 642 residues long: Mini-chromosome maintenance complex-binding protein (642 aa).

Residues 151–161 are compositionally biased toward polar residues; the sequence is ARVSPSTSYTP. Residues 151 to 197 are disordered; that stretch reads ARVSPSTSYTPSRHKRSYEDDDDMDLQPNKQKDQHAGARQAGSVGGL. Phosphoserine is present on S154. T160 is subject to Phosphothreonine. Residues S167 and S298 each carry the phosphoserine modification.

It belongs to the MCMBP family. As to quaternary structure, interacts with the MCM complex: associates with the MCM3-7 complex which lacks MCM2, while it does not interact with the MCM complex when MCM2 is present (MCM2-7 complex). Interacts with the RPA complex, when composed of all RPA1, RPA2 and RPA3 components, but not with RPA1 or RPA2 alone.

The protein resides in the nucleus. Associated component of the MCM complex that acts as a regulator of DNA replication. Binds to the MCM complex during late S phase and promotes the disassembly of the MCM complex from chromatin, thereby acting as a key regulator of pre-replication complex (pre-RC) unloading from replicated DNA. Can dissociate the MCM complex without addition of ATP; probably acts by destabilizing interactions of each individual subunits of the MCM complex. Required for sister chromatid cohesion. This is Mini-chromosome maintenance complex-binding protein (MCMBP) from Homo sapiens (Human).